Consider the following 859-residue polypeptide: DNA mismatch repair protein MutS (859 aa).

An ATP-binding site is contributed by Gly622–Ser629.

It belongs to the DNA mismatch repair MutS family.

This protein is involved in the repair of mismatches in DNA. It is possible that it carries out the mismatch recognition step. This protein has a weak ATPase activity. The polypeptide is DNA mismatch repair protein MutS (Coxiella burnetii (strain RSA 493 / Nine Mile phase I)).